Reading from the N-terminus, the 331-residue chain is Aspartate carbamoyltransferase catalytic subunit (331 aa).

Carbamoyl phosphate contacts are provided by Arg55 and Thr56. Lys84 provides a ligand contact to L-aspartate. Arg105, His133, and Gln136 together coordinate carbamoyl phosphate. L-aspartate is bound by residues Arg166 and Arg229. Leu268 and Pro269 together coordinate carbamoyl phosphate.

It belongs to the aspartate/ornithine carbamoyltransferase superfamily. ATCase family. In terms of assembly, heterododecamer (2C3:3R2) of six catalytic PyrB chains organized as two trimers (C3), and six regulatory PyrI chains organized as three dimers (R2).

It catalyses the reaction carbamoyl phosphate + L-aspartate = N-carbamoyl-L-aspartate + phosphate + H(+). It functions in the pathway pyrimidine metabolism; UMP biosynthesis via de novo pathway; (S)-dihydroorotate from bicarbonate: step 2/3. Its function is as follows. Catalyzes the condensation of carbamoyl phosphate and aspartate to form carbamoyl aspartate and inorganic phosphate, the committed step in the de novo pyrimidine nucleotide biosynthesis pathway. This Alkaliphilus oremlandii (strain OhILAs) (Clostridium oremlandii (strain OhILAs)) protein is Aspartate carbamoyltransferase catalytic subunit.